The chain runs to 791 residues: Leucine-rich repeat-containing protein SOG2 (791 aa).

The tract at residues 1–28 (MVATSSKRTLDPKEEHLPADKTSTNSSN) is disordered. Basic and acidic residues predominate over residues 8–19 (RTLDPKEEHLPA). LRR repeat units lie at residues 43–64 (SGTT…DVGY), 67–88 (NVER…FKRL), 90–111 (RLQY…LTQC), 113–134 (QLEI…ISSF), 138–159 (NIRV…KSIT), and 163–183 (KLSI…DQVQ). Threonine 214 bears the Phosphothreonine mark. Disordered stretches follow at residues 454–506 (ASKA…TPSA) and 534–569 (HTHG…PRQQ). Positions 469–486 (SSSSITSGGGPAASTTST) are enriched in low complexity. A compositionally biased stretch (polar residues) spans 544–569 (NAISNGSSQTNMNEVKTTSDTIPRQQ).

The protein resides in the cytoplasm. Its function is as follows. Required for proper cell morphogenesis and cell separation after mitosis. Functions in the RAM (regulation of ACE2 activity and cellular morphogenesis) signaling network and is required for proper ACE2 localization and CBK1 kinase activity. This is Leucine-rich repeat-containing protein SOG2 from Saccharomyces cerevisiae (strain ATCC 204508 / S288c) (Baker's yeast).